Reading from the N-terminus, the 524-residue chain is Chitinase D (524 aa).

Positions M1–A30 are cleaved as a signal peptide. Residues V95 to G180 enclose the Fibronectin type-III domain. The GH18 domain maps to K190–L514. E303 (proton donor) is an active-site residue.

It belongs to the glycosyl hydrolase 18 family. Chitinase class II subfamily.

It carries out the reaction Random endo-hydrolysis of N-acetyl-beta-D-glucosaminide (1-&gt;4)-beta-linkages in chitin and chitodextrins.. This chain is Chitinase D (chiD), found in Niallia circulans (Bacillus circulans).